The primary structure comprises 141 residues: Hemoglobin subunit alpha-A/Q/R/T (141 aa).

In terms of domain architecture, Globin spans 1-141 (VLSPADKTNV…VSTVLTSKYR (141 aa)). Ser3 carries the phosphoserine modification. Lys7 bears the N6-succinyllysine mark. The residue at position 8 (Thr8) is a Phosphothreonine. Lys11 carries the post-translational modification N6-succinyllysine. Residue Lys16 is modified to N6-acetyllysine; alternate. At Lys16 the chain carries N6-succinyllysine; alternate. Phosphotyrosine is present on Tyr24. Ser35 is modified (phosphoserine). Residue Lys40 is modified to N6-succinyllysine. Position 49 is a phosphoserine (Ser49). Position 58 (His58) interacts with O2. His87 serves as a coordination point for heme b. A Phosphoserine modification is found at Ser102. Phosphothreonine is present on Thr108. Phosphoserine is present on residues Ser124 and Ser131. 2 positions are modified to phosphothreonine: Thr134 and Thr137. Residue Ser138 is modified to Phosphoserine.

This sequence belongs to the globin family. In terms of assembly, heterotetramer of two alpha chains and two beta chains. Red blood cells.

In terms of biological role, involved in oxygen transport from the lung to the various peripheral tissues. This Macaca fascicularis (Crab-eating macaque) protein is Hemoglobin subunit alpha-A/Q/R/T.